Here is a 243-residue protein sequence, read N- to C-terminus: Phosphoribosyl isomerase A (243 aa).

Aspartate 10 serves as the catalytic Proton acceptor. The active-site Proton donor is the aspartate 129.

Belongs to the HisA/HisF family.

It is found in the cytoplasm. It catalyses the reaction 1-(5-phospho-beta-D-ribosyl)-5-[(5-phospho-beta-D-ribosylamino)methylideneamino]imidazole-4-carboxamide = 5-[(5-phospho-1-deoxy-D-ribulos-1-ylimino)methylamino]-1-(5-phospho-beta-D-ribosyl)imidazole-4-carboxamide. The enzyme catalyses N-(5-phospho-beta-D-ribosyl)anthranilate = 1-(2-carboxyphenylamino)-1-deoxy-D-ribulose 5-phosphate. It participates in amino-acid biosynthesis; L-histidine biosynthesis; L-histidine from 5-phospho-alpha-D-ribose 1-diphosphate: step 4/9. The protein operates within amino-acid biosynthesis; L-tryptophan biosynthesis; L-tryptophan from chorismate: step 3/5. Its function is as follows. Involved in both the histidine and tryptophan biosynthetic pathways. This is Phosphoribosyl isomerase A from Mycobacteroides abscessus (strain ATCC 19977 / DSM 44196 / CCUG 20993 / CIP 104536 / JCM 13569 / NCTC 13031 / TMC 1543 / L948) (Mycobacterium abscessus).